The chain runs to 358 residues: Serine/threonine-protein phosphatase 2A activator 2 (358 aa).

It belongs to the PTPA-type PPIase family.

Its subcellular location is the cytoplasm. It catalyses the reaction [protein]-peptidylproline (omega=180) = [protein]-peptidylproline (omega=0). PPIases accelerate the folding of proteins. It catalyzes the cis-trans isomerization of proline imidic peptide bonds in oligopeptides. Acts as a regulatory subunit for PP2A-like phosphatases modulating their activity or substrate specificity, probably by inducing a conformational change in the catalytic subunit, a direct target of the PPIase. Can reactivate inactive phosphatase PP2A-phosphatase methylesterase complexes (PP2Ai) in presence of ATP and Mg(2+) by dissociating the inactive form from the complex. This is Serine/threonine-protein phosphatase 2A activator 2 (RRD2) from Candida glabrata (strain ATCC 2001 / BCRC 20586 / JCM 3761 / NBRC 0622 / NRRL Y-65 / CBS 138) (Yeast).